A 553-amino-acid chain; its full sequence is Chaperonin GroEL 1 (553 aa).

Residues 29–32 (TIGP), 86–90 (DGTTT), G413, 476–478 (NAL), and D492 each bind ATP. A disordered region spans residues 521-542 (KPEPPAAPAPGGDPMGGMGGMG). Residues 533–542 (DPMGGMGGMG) are compositionally biased toward gly residues.

It belongs to the chaperonin (HSP60) family. Forms a cylinder of 14 subunits composed of two heptameric rings stacked back-to-back. Interacts with the co-chaperonin GroES.

It is found in the cytoplasm. It catalyses the reaction ATP + H2O + a folded polypeptide = ADP + phosphate + an unfolded polypeptide.. Functionally, together with its co-chaperonin GroES, plays an essential role in assisting protein folding. The GroEL-GroES system forms a nano-cage that allows encapsulation of the non-native substrate proteins and provides a physical environment optimized to promote and accelerate protein folding. The polypeptide is Chaperonin GroEL 1 (Synechococcus sp. (strain WH7803)).